Here is a 503-residue protein sequence, read N- to C-terminus: Aromatase (503 aa).

Cys-437 lines the heme pocket.

This sequence belongs to the cytochrome P450 family. Heme serves as cofactor.

Its subcellular location is the membrane. The catalysed reaction is testosterone + 3 reduced [NADPH--hemoprotein reductase] + 3 O2 = 17beta-estradiol + formate + 3 oxidized [NADPH--hemoprotein reductase] + 4 H2O + 4 H(+). It catalyses the reaction androst-4-ene-3,17-dione + 3 reduced [NADPH--hemoprotein reductase] + 3 O2 = estrone + formate + 3 oxidized [NADPH--hemoprotein reductase] + 4 H2O + 4 H(+). Catalyzes the formation of aromatic C18 estrogens from C19 androgens. This chain is Aromatase (CYP19A1), found in Oryctolagus cuniculus (Rabbit).